Consider the following 63-residue polypeptide: Large ribosomal subunit protein bL32c (63 aa).

Positions 38 to 63 (RSFSGVSEHPKPKGFSRQQTNNRVLG) are disordered. Polar residues predominate over residues 53 to 63 (SRQQTNNRVLG).

Belongs to the bacterial ribosomal protein bL32 family.

The protein localises to the plastid. The protein resides in the chloroplast. In Oryza sativa (Rice), this protein is Large ribosomal subunit protein bL32c (rpl32).